A 616-amino-acid polypeptide reads, in one-letter code: Chaperone protein HscA (616 aa).

The protein belongs to the heat shock protein 70 family.

In terms of biological role, chaperone involved in the maturation of iron-sulfur cluster-containing proteins. Has a low intrinsic ATPase activity which is markedly stimulated by HscB. Involved in the maturation of IscU. In Salmonella heidelberg (strain SL476), this protein is Chaperone protein HscA.